Consider the following 89-residue polypeptide: uncharacterized protein (89 aa).

Helical transmembrane passes span threonine 5–alanine 27, leucine 32–leucine 51, and leucine 63–alanine 85.

The protein resides in the cell membrane. This is an uncharacterized protein from Bacillus subtilis (strain 168).